The chain runs to 429 residues: Carbamoyl phosphate synthase arginine-specific small chain (429 aa).

Residues 1–20 (MIRVIQPPLIASKQLFRRYL) constitute a mitochondrion transit peptide. Positions 218 to 406 (HIAVLDCGAK…FENIEQYRAT (189 aa)) constitute a Glutamine amidotransferase type-1 domain. Catalysis depends on C295, which acts as the Nucleophile. Residues H379 and E381 contribute to the active site.

The protein belongs to the CarA family. Heterodimer composed of 2 chains; the small (or glutamine) chain promotes the hydrolysis of glutamine to ammonia, which is used by the large (or ammonia) chain to synthesize carbamoyl phosphate.

The protein localises to the mitochondrion matrix. The catalysed reaction is hydrogencarbonate + L-glutamine + 2 ATP + H2O = carbamoyl phosphate + L-glutamate + 2 ADP + phosphate + 2 H(+). The enzyme catalyses L-glutamine + H2O = L-glutamate + NH4(+). It participates in amino-acid biosynthesis; L-arginine biosynthesis; carbamoyl phosphate from bicarbonate: step 1/1. Its function is as follows. Small subunit of the arginine-specific carbamoyl phosphate synthase (CPSase). CPSase catalyzes the formation of carbamoyl phosphate from the ammonia moiety of glutamine, carbonate, and phosphate donated by ATP, the first step of the arginine biosynthetic pathway. The small subunit (glutamine amidotransferase) binds and cleaves glutamine to supply the large subunit with the substrate ammonia. The polypeptide is Carbamoyl phosphate synthase arginine-specific small chain (CPA1) (Debaryomyces hansenii (strain ATCC 36239 / CBS 767 / BCRC 21394 / JCM 1990 / NBRC 0083 / IGC 2968) (Yeast)).